Here is a 760-residue protein sequence, read N- to C-terminus: Complement C2 (760 aa).

Residues 1–18 (MAPLLALFYLLQLGPGLA) form the signal peptide. Sushi domains lie at 20–90 (LFCN…AVCK), 92–151 (VRCL…VCDN), and 154–212 (SHCP…ICRQ). Intrachain disulfides connect C22–C62, C49–C89, C94–C136, C122–C149, C156–C197, and C182–C210. 2 N-linked (GlcNAc...) asparagine glycosylation sites follow: N27 and N32. N117 carries N-linked (GlcNAc...) asparagine glycosylation. Residues 261 to 459 (NLYLLLDASQ…KALQQIFEHM (199 aa)) enclose the VWFA domain. An MIDAS-like motif motif is present at residues 267 to 271 (DASQS). Mg(2+) is bound by residues S269 and S271. N-linked (GlcNAc...) asparagine glycosylation is found at N297 and N340. T344 serves as a coordination point for Mg(2+). Cystine bridges form between C470-C590, C499-C515, C593-C609, C647-C674, and C685-C715. The Peptidase S1 domain occupies 471–752 (GVGNMSANAS…LQPWLRQHLD (282 aa)). Residues N474 and N478 are each glycosylated (N-linked (GlcNAc...) asparagine). Residues H514 and D570 each act as charge relay system in the active site. N663 carries an N-linked (GlcNAc...) asparagine glycan. S689 (charge relay system) is an active-site residue.

It belongs to the peptidase S1 family. In terms of assembly, serine protease component of the C3 convertase, also named C4bC2b, composed of the serine protease complement C2b and complement C4b. Serine protease component of the C5 convertase, also named C4bC2bC3b, composed of the serine protease complement C2b, complement C3b, as well as complement C4b. Mg(2+) is required as a cofactor. Mn(2+) serves as cofactor. Cleaved and activated by different proteases depending on the complement pathway to generate complement C2a and serine protease complement C2b chains. Cleaved and activated by C1S following activation by the classical complement system. Cleaved and activated by MASP2 following activation by the lectin complement system. Cleaved and activated by GZMK following activation by the GZMK complement system.

It is found in the secreted. It localises to the cell surface. The catalysed reaction is Selective cleavage of Arg-|-Ser bond in complement component C3 alpha-chain to form C3a and C3b, and Arg-|-Xaa bond in complement component C5 alpha-chain to form C5a and C5b.. Functionally, precursor of the catalytic component of the C3 and C5 convertase complexes, which are part of the complement pathway, a cascade of proteins that leads to phagocytosis and breakdown of pathogens and signaling that strengthens the adaptive immune system. Component C2 is part of the classical, lectin and GZMK complement systems. Its function is as follows. Catalytic component of the complement C3 and C5 convertase complexes. Following complement activation, recruited to the surface of pathogens by complement C4b opsonin to form the C3 convertase, or C3b and C4b opsonins to form the C5 convertase. As part of the C3 convertase, cleaves and activate C3 into C3a anaphylatoxin and C3b opsonin, the next components of the complement pathways. As part of the C5 convertase, cleaves and activate C5 into C5a anaphylatoxin and C5b component of the membrane attack complex. In Mus musculus (Mouse), this protein is Complement C2.